A 433-amino-acid chain; its full sequence is Putative wall-associated receptor kinase-like 16 (433 aa).

An N-terminal signal peptide occupies residues 1 to 22 (MKLQHVVYLVAIFFVVAIFVIA). Topologically, residues 23–29 (CIEENKY) are extracellular. The chain crosses the membrane as a helical span at residues 30–50 (LVWIMIILANTTNILSLVRSI). The Cytoplasmic portion of the chain corresponds to 51-433 (SYIKNIRKHQ…VARFDIEAGR (383 aa)). Thr97 is subject to Phosphothreonine. Positions 108–391 (YDVSRILGQG…RAKTTKHNWL (284 aa)) constitute a Protein kinase domain. ATP is bound by residues 114-122 (LGQGGQWTV) and Lys136. At Tyr181 the chain carries Phosphotyrosine. Asp233 functions as the Proton acceptor in the catalytic mechanism. A phosphothreonine mark is found at Thr267 and Thr272. Position 280 is a phosphotyrosine (Tyr280).

It belongs to the protein kinase superfamily. Ser/Thr protein kinase family.

The protein resides in the membrane. The catalysed reaction is L-seryl-[protein] + ATP = O-phospho-L-seryl-[protein] + ADP + H(+). The enzyme catalyses L-threonyl-[protein] + ATP = O-phospho-L-threonyl-[protein] + ADP + H(+). In terms of biological role, putative serine/threonine-protein kinase that may function as a signaling receptor of extracellular matrix component. In Arabidopsis thaliana (Mouse-ear cress), this protein is Putative wall-associated receptor kinase-like 16 (WAKL16).